The following is a 366-amino-acid chain: Chorismate synthase (366 aa).

R47 provides a ligand contact to NADP(+). FMN contacts are provided by residues 124-126, G286, 301-305, and R327; these read RSS and KPVAT.

Belongs to the chorismate synthase family. As to quaternary structure, homotetramer. FMNH2 is required as a cofactor.

The enzyme catalyses 5-O-(1-carboxyvinyl)-3-phosphoshikimate = chorismate + phosphate. It participates in metabolic intermediate biosynthesis; chorismate biosynthesis; chorismate from D-erythrose 4-phosphate and phosphoenolpyruvate: step 7/7. Functionally, catalyzes the anti-1,4-elimination of the C-3 phosphate and the C-6 proR hydrogen from 5-enolpyruvylshikimate-3-phosphate (EPSP) to yield chorismate, which is the branch point compound that serves as the starting substrate for the three terminal pathways of aromatic amino acid biosynthesis. This reaction introduces a second double bond into the aromatic ring system. The sequence is that of Chorismate synthase from Methylacidiphilum infernorum (isolate V4) (Methylokorus infernorum (strain V4)).